Reading from the N-terminus, the 469-residue chain is UDP-N-acetylmuramoylalanine--D-glutamate ligase (469 aa).

121–127 provides a ligand contact to ATP; the sequence is GTNGKST.

It belongs to the MurCDEF family.

Its subcellular location is the cytoplasm. The enzyme catalyses UDP-N-acetyl-alpha-D-muramoyl-L-alanine + D-glutamate + ATP = UDP-N-acetyl-alpha-D-muramoyl-L-alanyl-D-glutamate + ADP + phosphate + H(+). It participates in cell wall biogenesis; peptidoglycan biosynthesis. Its function is as follows. Cell wall formation. Catalyzes the addition of glutamate to the nucleotide precursor UDP-N-acetylmuramoyl-L-alanine (UMA). This Rhodopseudomonas palustris (strain ATCC BAA-98 / CGA009) protein is UDP-N-acetylmuramoylalanine--D-glutamate ligase.